A 373-amino-acid chain; its full sequence is Septin homolog spn3 (373 aa).

A Septin-type G domain is found at 10 to 286 (KGIPLNLMVV…ETYRTEKLST (277 aa)). The G1 motif stretch occupies residues 20–27 (GDVGLGRT). 20–27 (GDVGLGRT) provides a ligand contact to GTP. Residues 79–82 (DTPH) are G3 motif. Residues 161-164 (AKAD) form a G4 motif region. GTP is bound by residues 162–170 (KADSLTAQE) and R235. A Phosphoserine modification is found at S303. Positions 311–357 (EDRLRAIELSVQKEIEEKRRQLLAREEALRALEEKLAASTAAMANAS) form a coiled coil.

It belongs to the TRAFAC class TrmE-Era-EngA-EngB-Septin-like GTPase superfamily. Septin GTPase family. As to quaternary structure, component of the septin complex composed of two copies of each spn1, spn2, spn3 and spn4.

Its subcellular location is the cytoplasm. The protein resides in the cell cortex. Functionally, plays a role in the cell cycle. Involved in a late stage of septum formation leading to the separation of the daughter cells. The sequence is that of Septin homolog spn3 (spn3) from Schizosaccharomyces pombe (strain 972 / ATCC 24843) (Fission yeast).